A 78-amino-acid chain; its full sequence is MSRACELTGAKANNGMAVSHSHIRTKKLQQVNLQKRRLWWEEGKKWVNIKISTKALKSIQKVGLDKFAKSNGVDLKKF.

Belongs to the bacterial ribosomal protein bL28 family.

The polypeptide is Large ribosomal subunit protein bL28 (Prochlorococcus marinus (strain AS9601)).